We begin with the raw amino-acid sequence, 425 residues long: NAC domain-containing protein 10 (425 aa).

The span at 1–10 shows a compositional bias: polar residues; it reads MESPDSSSGS. Residues 1–34 form a disordered region; the sequence is MESPDSSSGSAPPRVLRRQQQQPGSAPELPPGFR. The segment covering 12-23 has biased composition (low complexity); sequence PPRVLRRQQQQP. In terms of domain architecture, NAC spans 29–200; the sequence is LPPGFRFHPT…DWVLCRIYKK (172 aa). A DNA-binding region spans residues 129 to 206; sequence VGVKKALVFY…IYKKTNKAGA (78 aa).

Highest expression in stamens. Expressed in leaves.

Its subcellular location is the nucleus. In terms of biological role, transcription factor of the NAC family associated with male fertility. Involved in anther development, but not in senescence. Reduced expression of NAC5 via RNAi leads to male-sterility. The polypeptide is NAC domain-containing protein 10 (Oryza sativa subsp. japonica (Rice)).